A 253-amino-acid chain; its full sequence is Tryptophan synthase alpha chain (253 aa).

Active-site proton acceptor residues include glutamate 46 and aspartate 57.

Belongs to the TrpA family. In terms of assembly, tetramer of two alpha and two beta chains.

It catalyses the reaction (1S,2R)-1-C-(indol-3-yl)glycerol 3-phosphate + L-serine = D-glyceraldehyde 3-phosphate + L-tryptophan + H2O. Its pathway is amino-acid biosynthesis; L-tryptophan biosynthesis; L-tryptophan from chorismate: step 5/5. Its function is as follows. The alpha subunit is responsible for the aldol cleavage of indoleglycerol phosphate to indole and glyceraldehyde 3-phosphate. The polypeptide is Tryptophan synthase alpha chain (Dictyoglomus turgidum (strain DSM 6724 / Z-1310)).